The following is a 183-amino-acid chain: Caspase recruitment domain-containing protein 19 (183 aa).

An intrachain disulfide couples Cys7 to Cys77. The 92-residue stretch at Asp8–His99 folds into the CARD domain. Residues Gly122–Cys142 traverse the membrane as a helical segment.

As to quaternary structure, associates with BCL10 by CARD-CARD interaction.

It localises to the endoplasmic reticulum membrane. The protein resides in the mitochondrion membrane. In terms of biological role, plays a role in inhibiting the effects of BCL10-induced activation of NF-kappa-B. May inhibit the phosphorylation of BCL10 in a CARD-dependent manner. This is Caspase recruitment domain-containing protein 19 (CARD19) from Bos taurus (Bovine).